Consider the following 217-residue polypeptide: Chloramphenicol acetyltransferase (217 aa).

The Proton acceptor role is filled by H193.

It belongs to the chloramphenicol acetyltransferase family. In terms of assembly, homotrimer.

The enzyme catalyses chloramphenicol + acetyl-CoA = chloramphenicol 3-acetate + CoA. In terms of biological role, this enzyme is an effector of chloramphenicol resistance in bacteria. The polypeptide is Chloramphenicol acetyltransferase (cat) (Proteus mirabilis).